The following is a 141-amino-acid chain: Hemoglobin subunit alpha (141 aa).

Positions 1–141 (VLSAADKANV…VSTVLTSKYR (141 aa)) constitute a Globin domain. Serine 3 is subject to Phosphoserine. 2 positions are modified to N6-succinyllysine: lysine 7 and lysine 11. Lysine 16 carries the post-translational modification N6-acetyllysine; alternate. Lysine 16 is modified (N6-succinyllysine; alternate). N6-succinyllysine is present on lysine 40. Serine 49 carries the post-translational modification Phosphoserine. Histidine 58 serves as a coordination point for O2. Residue histidine 87 participates in heme b binding. The residue at position 102 (serine 102) is a Phosphoserine. Threonine 108 is modified (phosphothreonine). The residue at position 124 (serine 124) is a Phosphoserine. A phosphothreonine mark is found at threonine 134 and threonine 137. Serine 138 is subject to Phosphoserine.

The protein belongs to the globin family. As to quaternary structure, heterotetramer of two alpha chains and two beta chains. Red blood cells.

Involved in oxygen transport from the lung to the various peripheral tissues. In terms of biological role, hemopressin acts as an antagonist peptide of the cannabinoid receptor CNR1. Hemopressin-binding efficiently blocks cannabinoid receptor CNR1 and subsequent signaling. This is Hemoglobin subunit alpha (HBA) from Sus scrofa (Pig).